Here is a 251-residue protein sequence, read N- to C-terminus: Protein TK1472 (251 aa).

The protein belongs to the CinA family.

The protein is Protein TK1472 of Thermococcus kodakarensis (strain ATCC BAA-918 / JCM 12380 / KOD1) (Pyrococcus kodakaraensis (strain KOD1)).